The chain runs to 196 residues: DnaA initiator-associating protein DiaA (196 aa).

An SIS domain is found at 34-196; that stretch reads MVQSLLNGNK…DNTLFPHQND (163 aa).

It belongs to the SIS family. DiaA subfamily. In terms of assembly, homotetramer; dimer of dimers.

Required for the timely initiation of chromosomal replication via direct interactions with the DnaA initiator protein. The protein is DnaA initiator-associating protein DiaA of Pectobacterium carotovorum subsp. carotovorum (strain PC1).